Consider the following 975-residue polypeptide: E3 ubiquitin-protein ligase NEDD4-like (975 aa).

N-acetylalanine is present on A2. Residues 4–126 (GLGEPVYGLS…TEDPTMERPY (123 aa)) form the C2 domain. 3 disordered regions span residues 178–202 (DSND…WEEK), 244–272 (AAHR…VPEP), and 285–312 (DSLG…EELS). Positions 193–226 (PPLPPGWEEKVDNLGRTYYVNHNNRTTQWHRPSL) constitute a WW 1 domain. A Phosphoserine modification is found at S312. Residue T318 is modified to Phosphothreonine. A Phosphoserine; by WNK1 and WNK4 modification is found at S342. Disordered regions lie at residues 349–393 (EQGH…GWEE) and 424–496 (GASG…KVTQ). Position 367 is a phosphothreonine; by SGK1 (T367). A WW 2 domain is found at 385-418 (PGLPSGWEERKDAKGRTYYVNHNNRTTTWTRPIM). S446 bears the Phosphoserine mark. The residue at position 448 (S448) is a Phosphoserine; by PKA and SGK1. The residue at position 449 (S449) is a Phosphoserine; by WNK1 and WNK4. Over residues 460–471 (GAKDSPVRRAVK) the composition is skewed to basic and acidic residues. S464, S475, S479, S483, and S487 each carry phosphoserine. 2 WW domains span residues 497–530 (SFLP…DPRL) and 548–581 (GPLP…DPRL). The HECT domain maps to 640 to 974 (RPDVLKARLW…VENAQGFEGV (335 aa)). Residue C942 is the Glycyl thioester intermediate of the active site.

In terms of assembly, interacts with UBE2E3. Interacts with NDFIP1; this interaction activates the E3 ubiquitin-protein ligase. Interacts with NDFIP2; this interaction activates the E3 ubiquitin-protein ligase. Interacts (via WW domains) with SCN1A. Interacts (via WW domains) with SCN2A. Interacts (via WW domains) with SCN3A. Interacts (via WW domains) with SCN5A. Interacts (via WW domains) with SCN8A. Interacts (via WW domains) with SCN9A. Interacts (via WW domains) with SCN10A. Interacts (via WW domains) with CLCN5. Interacts with SMAD2. Interacts with SMAD3. Interacts with SMAD6. Interacts with SMAD7. The phosphorylated form interacts with 14-3-3 proteins. Interacts with TNK2. Interacts with WNK1. Interacts with SGK1. Interacts (via C2 domain) with NPC2. Interacts with ARRDC4. Interacts with KCNQ1; promotes internalization of KCNQ1. Interacts (via domains WW1, 3 and 4) with USP36; the interaction inhibits ubiquitination of, at least, NTRK1, KCNQ2 and KCNQ3 by NEDD4L. Interacts with PRRG4 (via cytoplasmic domain). Interacts with LDLRAD3; the interaction is direct. Interacts with UBE2D2. Interacts with TTYH2 and TTYH3. (Microbial infection) Interacts with Epstein-Barr virus LMP2A. Phosphorylated by SGK1 or PKA; which impairs interaction with SCNN. Interaction with YWHAH inhibits dephosphorylation. Post-translationally, auto-ubiquitinated. Deubiquitinated by USP36, no effect on NEDD4L protein levels. Both proteins interact and regulate each other's ubiquitination levels. In terms of tissue distribution, ubiquitously expressed, with highest levels in prostate, pancreas, and kidney. Expressed in melanocytes.

Its subcellular location is the cytoplasm. The protein localises to the golgi apparatus. The protein resides in the endosome. It is found in the multivesicular body. The catalysed reaction is S-ubiquitinyl-[E2 ubiquitin-conjugating enzyme]-L-cysteine + [acceptor protein]-L-lysine = [E2 ubiquitin-conjugating enzyme]-L-cysteine + N(6)-ubiquitinyl-[acceptor protein]-L-lysine.. It catalyses the reaction [E2 ubiquitin-conjugating enzyme]-S-ubiquitinyl-L-cysteine + [acceptor protein]-L-cysteine = [E2 ubiquitin-conjugating enzyme]-L-cysteine + [acceptor protein]-S-ubiquitinyl-L-cysteine.. It functions in the pathway protein modification; protein ubiquitination. Its activity is regulated as follows. Activated by NDFIP1- and NDFIP2-binding. Functionally, E3 ubiquitin-protein ligase that mediates the polyubiquitination of lysine and cysteine residues on target proteins and is thereby implicated in the regulation of various signaling pathways including autophagy, innate immunity or DNA repair. Inhibits TGF-beta signaling by triggering SMAD2 and TGFBR1 ubiquitination and proteasome-dependent degradation. Downregulates autophagy and cell growth by ubiquitinating and reducing cellular ULK1 or ASCT2 levels. Promotes ubiquitination and internalization of various plasma membrane channels such as ENaC, SCN2A/Nav1.2, SCN3A/Nav1.3, SCN5A/Nav1.5, SCN9A/Nav1.7, SCN10A/Nav1.8, KCNA3/Kv1.3, KCNH2, EAAT1, KCNQ2/Kv7.2, KCNQ3/Kv7.3 or CLC5. Promotes ubiquitination and degradation of SGK1 and TNK2. Ubiquitinates BRAT1 and this ubiquitination is enhanced in the presence of NDFIP1. Plays a role in dendrite formation by melanocytes. Involved in the regulation of TOR signaling. Ubiquitinates and regulates protein levels of NTRK1 once this one is activated by NGF. Plays a role in antiviral innate immunity by catalyzing 'Lys-29'-linked cysteine ubiquitination of TRAF3, resulting in enhanced 'Lys-48' and 'Lys-63'-linked ubiquitination of TRAF3. Ubiquitinates TTYH2 and TTYH3 and regulates protein levels of TTYH2. The sequence is that of E3 ubiquitin-protein ligase NEDD4-like from Homo sapiens (Human).